Consider the following 301-residue polypeptide: tRNA pseudouridine synthase B (301 aa).

The active-site Nucleophile is aspartate 45.

This sequence belongs to the pseudouridine synthase TruB family. Type 1 subfamily.

It catalyses the reaction uridine(55) in tRNA = pseudouridine(55) in tRNA. Functionally, responsible for synthesis of pseudouridine from uracil-55 in the psi GC loop of transfer RNAs. The polypeptide is tRNA pseudouridine synthase B (Streptomyces avermitilis (strain ATCC 31267 / DSM 46492 / JCM 5070 / NBRC 14893 / NCIMB 12804 / NRRL 8165 / MA-4680)).